We begin with the raw amino-acid sequence, 1174 residues long: DNA-directed RNA polymerase subunit beta' (1174 aa).

Residues Cys-60, Cys-62, Cys-75, and Cys-78 each contribute to the Zn(2+) site. Mg(2+) is bound by residues Asp-450, Asp-452, and Asp-454. Cys-795, Cys-869, Cys-876, and Cys-879 together coordinate Zn(2+).

It belongs to the RNA polymerase beta' chain family. As to quaternary structure, the RNAP catalytic core consists of 2 alpha, 1 beta, 1 beta' and 1 omega subunit. When a sigma factor is associated with the core the holoenzyme is formed, which can initiate transcription. Mg(2+) is required as a cofactor. It depends on Zn(2+) as a cofactor.

It carries out the reaction RNA(n) + a ribonucleoside 5'-triphosphate = RNA(n+1) + diphosphate. Functionally, DNA-dependent RNA polymerase catalyzes the transcription of DNA into RNA using the four ribonucleoside triphosphates as substrates. In Clostridium kluyveri (strain ATCC 8527 / DSM 555 / NBRC 12016 / NCIMB 10680 / K1), this protein is DNA-directed RNA polymerase subunit beta'.